A 370-amino-acid polypeptide reads, in one-letter code: uncharacterized protein (370 aa).

10 consecutive transmembrane segments (helical) span residues 6-26 (AVVF…CLGN), 49-69 (IGIV…VAPF), 79-99 (SFAN…GEMA), 111-131 (FLGT…LGII), 143-163 (ILIG…CAGF), 167-187 (MIGK…FGLW), 206-226 (MVAI…IVLI), 236-256 (IQTT…TAFI), 307-327 (VAFA…VAGM), and 333-353 (AAMI…AAWM).

Belongs to the EutH family.

It is found in the cell membrane. This is an uncharacterized protein from Bacillus subtilis (strain 168).